A 360-amino-acid polypeptide reads, in one-letter code: RGG repeats nuclear RNA binding protein B (360 aa).

2 disordered regions span residues 1–216 and 250–360; these read MASV…DKEM and MQQL…TLGK. N-acetylalanine is present on Ala-2. Residues 58–77 show a composition bias toward gly residues; that stretch reads PGGGRGAGRGGSYGRGGRGG. 2 stretches are compositionally biased toward basic and acidic residues: residues 99–108 and 132–157; these read RRSEEGDGAR and DSER…RDGA. Over residues 162–176 the composition is skewed to polar residues; the sequence is WGTTQDDITPVTEES. 3 stretches are compositionally biased toward basic and acidic residues: residues 184–216, 258–283, and 311–336; these read LTVE…DKEM, SNND…EKTR, and REGR…RNQR. An FF domain is found at 223–288; sequence KVLEEKKKAL…EEKTRKSLSI (66 aa). Residue Ser-258 is modified to Phosphoserine.

Belongs to the SERBP1-HABP4 family.

The protein resides in the nucleus. Its subcellular location is the cytoplasm. The protein localises to the perinuclear region. In terms of biological role, ribosome-binding protein that acts as a regulator of mRNA translation by promoting ribosome inactivation. Binds RNA. The protein is RGG repeats nuclear RNA binding protein B of Arabidopsis thaliana (Mouse-ear cress).